A 333-amino-acid polypeptide reads, in one-letter code: Elongation factor Ts, mitochondrial (333 aa).

Residues 1 to 17 (MLRTLRPTLPSRCLRLY) constitute a mitochondrion transit peptide.

Belongs to the EF-Ts family.

It localises to the mitochondrion. Functionally, associates with the EF-Tu.GDP complex and induces the exchange of GDP to GTP. It remains bound to the aminoacyl-tRNA.EF-Tu.GTP complex up to the GTP hydrolysis stage on the ribosome. In Coprinopsis cinerea (strain Okayama-7 / 130 / ATCC MYA-4618 / FGSC 9003) (Inky cap fungus), this protein is Elongation factor Ts, mitochondrial.